A 291-amino-acid polypeptide reads, in one-letter code: F-box protein PP2-A12 (291 aa).

An F-box domain is found at 25 to 71 (KPGLGDLPEACVAIIVENLDPVEICRFSKLNRAFRGASWADCVWESK).

The chain is F-box protein PP2-A12 (P2A12) from Arabidopsis thaliana (Mouse-ear cress).